The primary structure comprises 167 residues: Leptin (167 aa).

The first 21 residues, 1–21 (MRCGPLCRFLWLWPYLSCVEA), serve as a signal peptide directing secretion. A disulfide bridge connects residues Cys-117 and Cys-167.

It belongs to the leptin family.

The protein localises to the secreted. Functionally, key player in the regulation of energy balance and body weight control. Once released into the circulation, has central and peripheral effects by binding LEPR, found in many tissues, which results in the activation of several major signaling pathways. In the hypothalamus, acts as an appetite-regulating factor that induces a decrease in food intake and an increase in energy consumption by inducing anorexinogenic factors and suppressing orexigenic neuropeptides, also regulates bone mass and secretion of hypothalamo-pituitary-adrenal hormones. In the periphery, increases basal metabolism, influences reproductive function, regulates pancreatic beta-cell function and insulin secretion, is pro-angiogenic for endothelial cell and affects innate and adaptive immunity. In the arcuate nucleus of the hypothalamus, activates by depolarization POMC neurons inducing FOS and SOCS3 expression to release anorexigenic peptides and inhibits by hyperpolarization NPY neurons inducing SOCS3 with a consequent reduction on release of orexigenic peptides. In addition to its known satiety inducing effect, has a modulatory role in nutrient absorption. In the intestine, reduces glucose absorption by enterocytes by activating PKC and leading to a sequential activation of p38, PI3K and ERK signaling pathways which exerts an inhibitory effect on glucose absorption. Acts as a growth factor on certain tissues, through the activation of different signaling pathways increases expression of genes involved in cell cycle regulation such as CCND1, via JAK2-STAT3 pathway, or VEGFA, via MAPK1/3 and PI3K-AKT1 pathways. May also play an apoptotic role via JAK2-STAT3 pathway and up-regulation of BIRC5 expression. Pro-angiogenic, has mitogenic activity on vascular endothelial cells and plays a role in matrix remodeling by regulating the expression of matrix metalloproteinases (MMPs) and tissue inhibitors of metalloproteinases (TIMPs). In innate immunity, modulates the activity and function of neutrophils by increasing chemotaxis and the secretion of oxygen radicals. Increases phagocytosis by macrophages and enhances secretion of pro-inflammatory mediators. Increases cytotoxic ability of NK cells. Plays a pro-inflammatory role, in synergy with IL1B, by inducing NOS2 which promotes the production of IL6, IL8 and Prostaglandin E2, through a signaling pathway that involves JAK2, PI3K, MAP2K1/MEK1 and MAPK14/p38. In adaptive immunity, promotes the switch of memory T-cells towards T helper-1 cell immune responses. Increases CD4(+)CD25(-) T-cell proliferation and reduces autophagy during TCR (T-cell receptor) stimulation, through MTOR signaling pathway activation and BCL2 up-regulation. The sequence is that of Leptin (LEP) from Canis lupus familiaris (Dog).